Here is a 309-residue protein sequence, read N- to C-terminus: MADSKLAQQHGVLVLNKPKGPTSAHCIARIKRLGQKKIGHAGTLDPMAQGVLLVLLGQCTKISGYLMEGGEKIYSGTLELGRTTDTWDDEGETLSTADWTHVTEEDVVRAVDLWTGSSEQQVPAYSAAKHKGQPLYKLAREGKETPVKTRRIEISQAETLAVELPFVRFRVHCSSGTYIRSLAHSLGNRLGCGAVLTELIREYSHPFSLDEAHDLDDVLAEPAELAGRVIPLDKALPHWPKLRLSAADEARVKNGMPHPYDPAEMASMPFTEGIRAVLLDPAGDPLALAETAYRNQVPVWTVLRGLWNT.

Residue D45 is the Nucleophile of the active site.

It belongs to the pseudouridine synthase TruB family. Type 1 subfamily.

It carries out the reaction uridine(55) in tRNA = pseudouridine(55) in tRNA. Responsible for synthesis of pseudouridine from uracil-55 in the psi GC loop of transfer RNAs. This chain is tRNA pseudouridine synthase B, found in Oleidesulfovibrio alaskensis (strain ATCC BAA-1058 / DSM 17464 / G20) (Desulfovibrio alaskensis).